Reading from the N-terminus, the 158-residue chain is Interleukin-36 alpha (158 aa).

A propeptide spanning residues Met-1 to Leu-5 is cleaved from the precursor. Tyr-96 carries the post-translational modification 3'-nitrotyrosine.

Belongs to the IL-1 family. In terms of assembly, interacts with TMED10; the interaction mediates the translocation from the cytoplasm into the ERGIC (endoplasmic reticulum-Golgi intermediate compartment) and thereby secretion. Post-translationally, N-terminal truncation leads to a dramatic enhancement of its activity (&gt;1000-fold). Expressed in immune system and fetal brain, but not in other tissues tested or in multiple hematopoietic cell lines. Predominantly expressed in skin keratinocytes but not in fibroblasts, endothelial cells or melanocytes. Increased in lesional psoriasis skin.

The protein resides in the cytoplasm. Its subcellular location is the secreted. Functionally, cytokine that binds to and signals through the IL1RL2/IL-36R receptor which in turn activates NF-kappa-B and MAPK signaling pathways in target cells linked to a pro-inflammatory response. Part of the IL-36 signaling system that is thought to be present in epithelial barriers and to take part in local inflammatory response; similar to the IL-1 system with which it shares the coreceptor IL1RAP. Seems to be involved in skin inflammatory response by acting on keratinocytes, dendritic cells and indirectly on T-cells to drive tissue infiltration, cell maturation and cell proliferation. In cultured keratinocytes induces the expression of macrophage, T-cell, and neutrophil chemokines, such as CCL3, CCL4, CCL5, CCL2, CCL17, CCL22, CL20, CCL5, CCL2, CCL17, CCL22, CXCL8, CCL20 and CXCL1, and the production of pro-inflammatory cytokines such as TNF-alpha, IL-8 and IL-6. In cultured monocytes up-regulates expression of IL-1A, IL-1B and IL-6. In myeloid dendritic cells involved in cell maturation by up-regulating surface expression of CD83, CD86 and HLA-DR. In monocyte-derived dendritic cells facilitates dendritic cell maturation and drives T-cell proliferation. May play a role in pro-inflammatory effects in the lung. This chain is Interleukin-36 alpha, found in Homo sapiens (Human).